Reading from the N-terminus, the 92-residue chain is Signal recognition particle 19 kDa protein (92 aa).

Belongs to the SRP19 family. In terms of assembly, part of the signal recognition particle protein translocation system, which is composed of SRP and FtsY. Archaeal SRP consists of a 7S RNA molecule of 300 nucleotides and two protein subunits: SRP54 and SRP19.

It localises to the cytoplasm. In terms of biological role, involved in targeting and insertion of nascent membrane proteins into the cytoplasmic membrane. Binds directly to 7S RNA and mediates binding of the 54 kDa subunit of the SRP. The chain is Signal recognition particle 19 kDa protein from Methanosphaera stadtmanae (strain ATCC 43021 / DSM 3091 / JCM 11832 / MCB-3).